The following is a 618-amino-acid chain: Serine--tRNA ligase, cytoplasmic (618 aa).

Position 417–419 (Thr-417–Glu-419) interacts with L-serine. ATP is bound at residue Arg-448–Glu-450. Residue Glu-472 participates in L-serine binding. Glu-536–Ser-539 lines the ATP pocket. Residue Ser-570 coordinates L-serine.

Belongs to the class-II aminoacyl-tRNA synthetase family. Type-1 seryl-tRNA synthetase subfamily. Homodimer. The tRNA molecule binds across the dimer.

It localises to the cytoplasm. It catalyses the reaction tRNA(Ser) + L-serine + ATP = L-seryl-tRNA(Ser) + AMP + diphosphate + H(+). It carries out the reaction tRNA(Sec) + L-serine + ATP = L-seryl-tRNA(Sec) + AMP + diphosphate + H(+). The protein operates within aminoacyl-tRNA biosynthesis; selenocysteinyl-tRNA(Sec) biosynthesis; L-seryl-tRNA(Sec) from L-serine and tRNA(Sec): step 1/1. Its function is as follows. Catalyzes the attachment of serine to tRNA(Ser). Is also able to aminoacylate tRNA(Sec) with serine, to form the misacylated tRNA L-seryl-tRNA(Sec), which will be further converted into selenocysteinyl-tRNA(Sec). This is Serine--tRNA ligase, cytoplasmic from Plasmodium falciparum (isolate 3D7).